A 301-amino-acid chain; its full sequence is UDP-3-O-acyl-N-acetylglucosamine deacetylase (301 aa).

Zn(2+) is bound by residues histidine 75, histidine 233, and aspartate 237. Histidine 260 serves as the catalytic Proton donor.

It belongs to the LpxC family. It depends on Zn(2+) as a cofactor.

It carries out the reaction a UDP-3-O-[(3R)-3-hydroxyacyl]-N-acetyl-alpha-D-glucosamine + H2O = a UDP-3-O-[(3R)-3-hydroxyacyl]-alpha-D-glucosamine + acetate. Its pathway is glycolipid biosynthesis; lipid IV(A) biosynthesis; lipid IV(A) from (3R)-3-hydroxytetradecanoyl-[acyl-carrier-protein] and UDP-N-acetyl-alpha-D-glucosamine: step 2/6. Its function is as follows. Catalyzes the hydrolysis of UDP-3-O-myristoyl-N-acetylglucosamine to form UDP-3-O-myristoylglucosamine and acetate, the committed step in lipid A biosynthesis. This chain is UDP-3-O-acyl-N-acetylglucosamine deacetylase, found in Aliarcobacter butzleri (strain RM4018) (Arcobacter butzleri).